Reading from the N-terminus, the 305-residue chain is MSPTLPDVAVTEPSTLSAPLRWVGMQDIAIPVQLETGSSQLAARASVQVDLPRAELKGIHMSRLYRLLDTHLQQPLSPAMLSQLLQALIDSHADCASRAARLTLSFELMLRTPALRSEGLSGWRAYPVHIAAQCRAGRTTIQLQIEVLYASTCPCSAALSRQLLSDAFVQQHAGRDTLPLRDVVQWLQDHGTYATPHSQRSVAQVRVELPADAQRLAIQQLVGLCEQALATPVQAAVRRPDEQAFARLNGANLMCVEDAARRLRKPLAEHYAAFHVAVRHLESLHAHDAVAETGSDDAVLGPTTM.

The protein belongs to the GTP cyclohydrolase IV family.

It carries out the reaction GTP + H2O = 7,8-dihydroneopterin 3'-triphosphate + formate + H(+). Its pathway is cofactor biosynthesis; 7,8-dihydroneopterin triphosphate biosynthesis; 7,8-dihydroneopterin triphosphate from GTP: step 1/1. Converts GTP to 7,8-dihydroneopterin triphosphate. The protein is GTP cyclohydrolase FolE2 of Xanthomonas axonopodis pv. citri (strain 306).